The sequence spans 177 residues: Ribosome maturation factor RimM (177 aa).

The region spanning 98-171 (GETIFLSEIK…AVVMDLPEGL (74 aa)) is the PRC barrel domain.

Belongs to the RimM family. Binds ribosomal protein uS19.

It localises to the cytoplasm. An accessory protein needed during the final step in the assembly of 30S ribosomal subunit, possibly for assembly of the head region. Essential for efficient processing of 16S rRNA. May be needed both before and after RbfA during the maturation of 16S rRNA. It has affinity for free ribosomal 30S subunits but not for 70S ribosomes. This is Ribosome maturation factor RimM from Bdellovibrio bacteriovorus (strain ATCC 15356 / DSM 50701 / NCIMB 9529 / HD100).